The following is a 213-amino-acid chain: Ras-related protein Rab-39B (213 aa).

The GTP site is built by Ser17, Gly20, Lys21, Ser22, Cys23, Ser37, and Thr40. Ser22 is a Mg(2+) binding site. A switch-I region spans residues 35 to 43; that stretch reads QVSDPTVGV. Residues Thr40 and Asp64 each coordinate Mg(2+). Positions 67, 123, 124, 126, 154, and 155 each coordinate GTP. The interval 67 to 83 is switch-II; the sequence is GQERFRSITRAYYRNSV. Ser201 carries the phosphoserine modification. 2 S-geranylgeranyl cysteine lipidation sites follow: Cys211 and Cys213. Cysteine methyl ester is present on Cys213.

It belongs to the small GTPase superfamily. Rab family. As to quaternary structure, interacts (GDP-bound) with C9orf72; C9orf72 in complex with SMCR8 acts as a GEF for RAB39B. Interacts (in GTP-bound form) with PICK1 (via PDZ domain); a PICK1 homodimer may allow simultaneous association of RAB39B and GRIA2 to PICK1 which is involved in GRIA2 trafficking. Interacts with isoform c of RASSF1; the interaction is strong. Interacts with isoform a of RASSF1; the interaction is weak. Interacts with the DLG4/PSD-95. Interacts (GTP-bound) with HOPS complex components VPS39 and VPS41. Mg(2+) serves as cofactor. As to expression, highly expressed in the brain.

Its subcellular location is the cell membrane. It localises to the cytoplasmic vesicle membrane. The protein resides in the golgi apparatus. The protein localises to the cytoplasmic vesicle. It is found in the autophagosome membrane. Its subcellular location is the autolysosome membrane. It carries out the reaction GTP + H2O = GDP + phosphate + H(+). Its activity is regulated as follows. Regulated by guanine nucleotide exchange factors (GEFs) including C9orf72-SMCR8 complex, which promote the exchange of bound GDP for free GTP. Regulated by GTPase activating proteins (GAPs) which increase the GTP hydrolysis activity. Inhibited by GDP dissociation inhibitors (GDIs). Its function is as follows. The small GTPases Rab are key regulators of intracellular membrane trafficking, from the formation of transport vesicles to their fusion with membranes. Rabs cycle between an inactive GDP-bound form and an active GTP-bound form that is able to recruit to membranes different sets of downstream effectors directly responsible for vesicle formation, movement, tethering and fusion. RAB39B is involved in autophagy and may function in autophagosome formation. Binds downstream effector PICK1 to ensure selectively GRIA2 exit from the endoplasmic reticulum to the Golgi and to regulate AMPAR composition at the post-synapses and thus synaptic transmission. May regulate the homeostasis of SNCA/alpha-synuclein. In Homo sapiens (Human), this protein is Ras-related protein Rab-39B.